The primary structure comprises 879 residues: MEKLGLNQIREMYLSFFEKKAHLRLPSFSLVPQNDKSLLLINAGMTPLKPYFTGLKVPPSKRVATCQKCIRTGDIENVGKTSRHGTFFEMLGNFSFGDYFKKEAIPWAWEFITEVLKLPKDRLYVTIYLDDDEAYDIWVKSTDVDPSKIFRLGKEDNFWEHGVGPCGPCSEIYYDRAQEKINSVEEFVEAADNDKIVEFWNLVFTQFDKDENGNYNRLSNPNIDTGMGLERMATIMQGENSIFEVDTINAILKEVCNISGTKYNEHKNNDISIRIITDHIRSITFMISDGILPSNEGRGYVLRRLLRRAAKHGKSLGIDDRFLYKLSNVVIDNSCESYPKLKDRKEYIKKVIRLEEERFDETIDSGMKILNEFIEELENSNSLLLEGEKAFKLYDTYGFPIELTEEILQEKNMGVDLEGFNKKMQNQKEMARSARTETNYMGAEDTVLNKIPLYIDTVFEGYNSLESTSKVKLMIKEGEFVSLLSQGEKGVILVANTPFYAEMGGQVGDKGIIYNENFEGKIIDCKNNVAGKILHFVEVISGSVSLEDTVLLKVDKNRRDDIRRNHTSTHLLGEALRRVLGEHVHQSGSYVDEHRLRFDFNHFESLNDKQLREVEELVNENIRKAKTVNTNLMSLEEAKKSGAVAIFDSKYSDEVRVVSIGDFSRELCGGTHVGNSGEIGLFKIVSEAGIAAGIRRIEAVTGREAVEYLYSKSDMLKEIANKFKCSEKEIVHKLDLQFNELRELRKELEEFKIKLAGSAEESILNGVKIVKGINLFTGILKDVDGNALRELADKIRSKSQNAVVLLGSNAEGKVNLVAMATKDAVEKGVHCGKIIKEVAAVAGGGGGGRPDMAQAGGKFPDKLEEAIGKCSAIMEKIVK.

The Zn(2+) site is built by His566, His570, Cys668, and His672.

Belongs to the class-II aminoacyl-tRNA synthetase family. Requires Zn(2+) as cofactor.

The protein resides in the cytoplasm. It catalyses the reaction tRNA(Ala) + L-alanine + ATP = L-alanyl-tRNA(Ala) + AMP + diphosphate. Catalyzes the attachment of alanine to tRNA(Ala) in a two-step reaction: alanine is first activated by ATP to form Ala-AMP and then transferred to the acceptor end of tRNA(Ala). Also edits incorrectly charged Ser-tRNA(Ala) and Gly-tRNA(Ala) via its editing domain. This Clostridium kluyveri (strain ATCC 8527 / DSM 555 / NBRC 12016 / NCIMB 10680 / K1) protein is Alanine--tRNA ligase.